Here is a 353-residue protein sequence, read N- to C-terminus: Putative glycosyltransferase TagX (353 aa).

It belongs to the glycosyltransferase 2 family.

The polypeptide is Putative glycosyltransferase TagX (tagX) (Staphylococcus aureus (strain COL)).